We begin with the raw amino-acid sequence, 2543 residues long: Highly reducing polyketide synthase PKS2 (2543 aa).

The Ketosynthase family 3 (KS3) domain maps to 4–425; sequence EPRIAVIGLS…GSNSAILLEG (422 aa). Active-site for beta-ketoacyl synthase activity residues include Cys174, His309, and His349. The segment at 573 to 902 is malonyl-CoA:ACP transacylase (MAT) domain; it reads VFTGQGAQHA…TYLPTLFRGT (330 aa). The active-site For malonyltransferase activity is Ser662. The tract at residues 969 to 1101 is N-terminal hotdog fold; that stretch reads HPLLGRKISP…GQIEAEMTDM (133 aa). One can recognise a PKS/mFAS DH domain in the interval 969-1281; sequence HPLLGRKISP…FRNIGSAEEV (313 aa). The interval 969–1283 is dehydratase (DH) domain; the sequence is HPLLGRKISP…NIGSAEEVID (315 aa). The active-site Proton acceptor; for dehydratase activity is the His1001. Residues 1119-1281 form a C-terminal hotdog fold region; it reads TGLKEHDINA…FRNIGSAEEV (163 aa). Residue Asp1188 is the Proton donor; for dehydratase activity of the active site. The tract at residues 1438-1631 is methyltransferase (CMet) domain; it reads SKVLGYLTEY…LPSRYGTDKP (194 aa). Residues 1847–2159 form an enoylreductase (ER) domain region; that stretch reads GSPDTIYFQR…SGEHMGKMVI (313 aa). Residues 2184 to 2359 form a ketoreductase (KR) domain region; the sequence is ATYLVAGGTR…YTVSIALPVV (176 aa). The Carrier domain occupies 2463–2540; that stretch reads DPLIGLTEAM…ALATEILSQR (78 aa). O-(pantetheine 4'-phosphoryl)serine is present on Ser2500.

It functions in the pathway secondary metabolite biosynthesis. Highly reducing polyketide synthase; part of the gene cluster that mediates the biosynthesis of phomenoic acid, a long chain aliphatic carboxylic acid that does not appear to be essential for pathogenicity but may play a role in allowing to outcompete other fungi in the environmental niche via its antifungal properties. The polyketide synthase produces the long methylated aliphatic carboxylic acid chain of phomenoic acid. The cluster-specific cytochrome P450 monooxygenase may then hydroxylate the methyl group of carbon 31. The putative dehydrogenase YogA, which has no obvious role in phomenoic acid biosynthesis, may further modify phomenoic acid to produce a compound not identified yet. This Leptosphaeria maculans (strain JN3 / isolate v23.1.3 / race Av1-4-5-6-7-8) (Blackleg fungus) protein is Highly reducing polyketide synthase PKS2.